Here is a 562-residue protein sequence, read N- to C-terminus: Restriction of telomere capping protein 5 (562 aa).

A disordered region spans residues 1–21; the sequence is MGQTPSVESQESKETKNEMPE. A compositionally biased stretch (basic and acidic residues) spans 10–21; sequence QESKETKNEMPE. Residues 283 to 509 form the TLDc domain; it reads KLMTYPLVAQ…IRDVEVWGCG (227 aa).

This sequence belongs to the RTC5 family.

The protein localises to the cytoplasm. Its function is as follows. May be involved in a process influencing telomere capping. The sequence is that of Restriction of telomere capping protein 5 (RTC5) from Vanderwaltozyma polyspora (strain ATCC 22028 / DSM 70294 / BCRC 21397 / CBS 2163 / NBRC 10782 / NRRL Y-8283 / UCD 57-17) (Kluyveromyces polysporus).